The primary structure comprises 130 residues: Small ribosomal subunit protein uS9 (130 aa).

The protein belongs to the universal ribosomal protein uS9 family.

The chain is Small ribosomal subunit protein uS9 from Aster yellows witches'-broom phytoplasma (strain AYWB).